The following is a 138-amino-acid chain: Putative pre-16S rRNA nuclease (138 aa).

The protein belongs to the YqgF nuclease family.

It is found in the cytoplasm. Functionally, could be a nuclease involved in processing of the 5'-end of pre-16S rRNA. This chain is Putative pre-16S rRNA nuclease, found in Karelsulcia muelleri (strain GWSS) (Sulcia muelleri).